The sequence spans 320 residues: o-succinylbenzoate synthase (320 aa).

The active-site Proton donor is K133. Positions 161, 190, and 213 each coordinate Mg(2+). The active-site Proton acceptor is K235.

It belongs to the mandelate racemase/muconate lactonizing enzyme family. MenC type 1 subfamily. The cofactor is a divalent metal cation.

It carries out the reaction (1R,6R)-6-hydroxy-2-succinyl-cyclohexa-2,4-diene-1-carboxylate = 2-succinylbenzoate + H2O. The protein operates within quinol/quinone metabolism; 1,4-dihydroxy-2-naphthoate biosynthesis; 1,4-dihydroxy-2-naphthoate from chorismate: step 4/7. It participates in quinol/quinone metabolism; menaquinone biosynthesis. Converts 2-succinyl-6-hydroxy-2,4-cyclohexadiene-1-carboxylate (SHCHC) to 2-succinylbenzoate (OSB). This is o-succinylbenzoate synthase from Shigella boydii serotype 18 (strain CDC 3083-94 / BS512).